The sequence spans 64 residues: Alpha-conotoxin CnIC (64 aa).

The first 21 residues, 1 to 21, serve as a signal peptide directing secretion; the sequence is MGMRMMFTVFLLVVLTTTVVS. Residues 22–47 constitute a propeptide that is removed on maturation; the sequence is FPSDSASDVRDDEAKDERSDMYKSKR. Asn-48 carries the post-translational modification Deamidated asparagine; in CnIH; partial. Intrachain disulfides connect Cys-51/Cys-56 and Cys-52/Cys-62. At Cys-62 the chain carries Cysteine amide.

This sequence belongs to the conotoxin A superfamily. As to expression, expressed by the venom duct.

The protein resides in the secreted. Functionally, alpha-conotoxins act on postsynaptic membranes, they bind to the nicotinic acetylcholine receptors (nAChR) and thus inhibit them. The polypeptide is Alpha-conotoxin CnIC (Conus consors (Singed cone)).